The primary structure comprises 638 residues: MSDSFNLPLRPLTEKRERPDPLPVEIAQINAQYGSFRDVTEDSLRAKIEADKNKDPWFDKEENDNASADEDTTERLDQLYKRRAAITQFALQAHMEAMFALDFVSLLLSKHTPRQAEMSMSAYLKQVAPLGSLNSEIVNPPPKPESAARDTKNVSRGWRLQNFNSAASKLLDSATRLEAEVASETRYWDEVLAVKEKGWKVSRLPRERQALGVQYGFLEATPIFRDRGLAALRRTNDGSLILDKGLIPLKARTVRVRVRSRGQITGCSKNQPASDNTESIESRILQARDTVYEEELFHELVREARILGSQGVTTRQNLVQFPVSEEQEVLLDLIDSDQISPENDVVSSNEHAVVADALAHAIRILLAYAHRQNLRRRTQLPTPLTPKRRQTPEYQLLRPVMAYLQHSSHVRWLESLLNDINQILKSAGITCDFTATPFSSLSLRRTISGLPKVEALVQEFLLPYESTFSAQLVTPQSSFRVKVRTNVTTPPLGTHYEISVNMPQYPDVRPPNRIGLQDEAASILTHFVLLDILTAITHAKGSSVKGIKQETGHLLTWQAAYPHNGELLALSSTGQHKKMKVSLSRHELTVRVYSIRGIDGFGKPAVDKTPAMRSQTWKCDGTPDQPNLMDFIAEVSKE.

Residues M1 to P21 are disordered.

The protein belongs to the Mediator complex subunit 17 family. In terms of assembly, component of the Mediator complex.

The protein localises to the nucleus. Its function is as follows. Component of the Mediator complex, a coactivator involved in the regulated transcription of nearly all RNA polymerase II-dependent genes. Mediator functions as a bridge to convey information from gene-specific regulatory proteins to the basal RNA polymerase II transcription machinery. Mediator is recruited to promoters by direct interactions with regulatory proteins and serves as a scaffold for the assembly of a functional preinitiation complex with RNA polymerase II and the general transcription factors. The protein is Mediator of RNA polymerase II transcription subunit 17 (srb4) of Aspergillus oryzae (strain ATCC 42149 / RIB 40) (Yellow koji mold).